The chain runs to 209 residues: Cerebral peptide 1 (209 aa).

The signal sequence occupies residues 1-20 (MLLAKISVVVLLLAIDGTSS). Polar residues predominate over residues 21-39 (SESTDNVVLSSSPDSQKAA). The propeptide at 21 to 43 (SESTDNVVLSSSPDSQKAATSRH) is connecting peptide 1. Positions 21-56 (SESTDNVVLSSSPDSQKAATSRHKRAPGWGKRSSLN) are disordered. Tryptophan 49 carries the tryptophan amide modification. Residues 53–77 (SSLNDEDLFADSDSAQELLDSVAAL) constitute a propeptide, connecting peptide 2. 2 positions are modified to tryptophan amide: tryptophan 83 and tryptophan 105. The segment at 98–169 (EAKRAPGWGK…APGWGKRSGG (72 aa)) is disordered. The propeptide at 109-122 (GQEIDVDEDGSEQE) is connecting peptide 4. A tryptophan amide mark is found at tryptophan 128, tryptophan 135, tryptophan 142, tryptophan 149, tryptophan 156, and tryptophan 163. Residues 167 to 191 (SGGDYCETLEKMVDAYIYKAVEVDS) constitute a propeptide, connecting peptide 5. Cysteine 172 and cysteine 197 are joined by a disulfide.

In terms of assembly, homodimer; disulfide-linked. Cerebral peptide 1 is expressed in the cerebral, pedal and buccal ganglia and B1 and B2 neurons. APGW-amide is expressed in buccal ganglia and several neurons.

The protein localises to the secreted. Functionally, may function as a peptide transmitter. The chain is Cerebral peptide 1 from Aplysia californica (California sea hare).